A 190-amino-acid chain; its full sequence is RRP15-like protein (190 aa).

Over residues 1–11 (MSTKNRDRLVV) the composition is skewed to basic and acidic residues. 2 disordered regions span residues 1-69 (MSTK…TRKE) and 119-190 (QKTM…SDED). Positions 55 to 66 (QRKKKKVIKKLT) are enriched in basic residues. Residues 59 to 84 (KKVIKKLTRKEQSLKHSVKEYRIKLA) adopt a coiled-coil conformation. Over residues 119-153 (QKTMSDAVKEKMTARDRKEARERFDGKNFDSDKFA) the composition is skewed to basic and acidic residues. Positions 167 to 190 (GEEEDEQMNIGDDEIDAGNYSDED) are enriched in acidic residues.

Belongs to the RRP15 family.

This is RRP15-like protein from Caenorhabditis briggsae.